Consider the following 274-residue polypeptide: Bis(5'-nucleosyl)-tetraphosphatase, symmetrical (274 aa).

The protein belongs to the Ap4A hydrolase family.

It catalyses the reaction P(1),P(4)-bis(5'-adenosyl) tetraphosphate + H2O = 2 ADP + 2 H(+). Hydrolyzes diadenosine 5',5'''-P1,P4-tetraphosphate to yield ADP. The protein is Bis(5'-nucleosyl)-tetraphosphatase, symmetrical of Shewanella sp. (strain ANA-3).